The sequence spans 908 residues: Glutamate receptor ionotropic, kainate 2 (908 aa).

The N-terminal stretch at 1–31 (MKIIFPILSNPVFRRTVKLLLCLLWIGYSQG) is a signal peptide. At 32 to 561 (TTHVLRFGGI…VFSFLNPLSP (530 aa)) the chain is on the extracellular side. N-linked (GlcNAc...) asparagine glycosylation is found at Asn-67, Asn-73, Asn-275, Asn-378, Asn-412, Asn-423, and Asn-430. A disulfide bridge links Cys-96 with Cys-347. L-glutamate is bound by residues Pro-516, Ala-518, and Arg-523. An N-linked (GlcNAc...) asparagine glycan is attached at Asn-546. A helical membrane pass occupies residues 562–582 (DIWMYILLAYLGVSCVLFVIA). The Cytoplasmic portion of the chain corresponds to 583 to 635 (RFSPYEWYNPHPCNPDSDVVENNFTLLNSFWFGVGALMQQGSELMPKALSTRI). Residues 636 to 656 (VGGIWWFFTLIIISSYTANLA) traverse the membrane as a helical segment. Residues 657–819 (AFLTVERMES…KEASALGVQN (163 aa)) lie on the Extracellular side of the membrane. L-glutamate-binding residues include Ala-689, Thr-690, and Glu-738. An intrachain disulfide couples Cys-750 to Cys-804. A glycan (N-linked (GlcNAc...) asparagine) is linked at Asn-751. The helical transmembrane segment at 820–840 (IGGIFIVLAAGLVLSVFVAVG) threads the bilayer. Topologically, residues 841–908 (EFLYKSKKNA…RRLPGKETMA (68 aa)) are cytoplasmic. Ser-846 and Ser-868 each carry phosphoserine; by PKC. A Glycyl lysine isopeptide (Lys-Gly) (interchain with G-Cter in SUMO1) cross-link involves residue Lys-886.

It belongs to the glutamate-gated ion channel (TC 1.A.10.1) family. GRIK2 subfamily. Homotetramer and heterotetramer with GRIK5. Tetramers may be formed by the dimerization of dimers. Assembles into a kainate-gated homomeric channel that does not bind AMPA. Can form functional heteromeric receptors with GRIK5. Can form functional heteromeric receptors with GRIK3 and GRIK4. Interacts with DLG4. Interacts with NETO2. Interacts (via C-terminus) with KLHL17 (via kelch repeats); the interaction targets GRIK2 for degradation via ubiquitin-proteasome pathway. In terms of processing, sumoylation mediates kainate receptor-mediated endocytosis and regulates synaptic transmission. Sumoylation is enhanced by PIAS3 and desumoylated by SENP1. Post-translationally, ubiquitinated. Ubiquitination regulates the GRIK2 levels at the synapse by leading kainate receptor degradation through proteasome. Phosphorylated by PKC at Ser-868 upon agonist activation, this directly enhance sumoylation. Expression is higher in cerebellum than in cerebral cortex.

It localises to the cell membrane. The protein resides in the postsynaptic cell membrane. The enzyme catalyses Ca(2+)(in) = Ca(2+)(out). The catalysed reaction is Na(+)(in) = Na(+)(out). With respect to regulation, cold receptor activity activated by temperatures between 10-19 degrees Celsius. Its function is as follows. Ionotropic glutamate receptor that functions as a cation permeable ligand-gated ion channel, gated by L-glutamate and the glutamatergic agonist kainic acid. L-glutamate acts as an excitatory neurotransmitter at many synapses in the central nervous system. Binding of the excitatory neurotransmitter L-glutamate induces a conformation change, leading to the opening of the cation channel, and thereby converts the chemical signal to an electrical impulse. The receptor then desensitizes rapidly and enters a transient inactive state, characterized by the presence of bound agonist. Modulates cell surface expression of NETO2. In association with GRIK3, involved in presynaptic facilitation of glutamate release at hippocampal mossy fiber synapses. Functionally, independent of its ionotropic glutamate receptor activity, acts as a thermoreceptor conferring sensitivity to cold temperatures. Functions in dorsal root ganglion neurons. This is Glutamate receptor ionotropic, kainate 2 (GRIK2) from Homo sapiens (Human).